We begin with the raw amino-acid sequence, 340 residues long: Coproporphyrin III ferrochelatase (340 aa).

Residues S52 and Y121 each contribute to the Fe-coproporphyrin III site. The Fe(2+) site is built by H177 and E260.

It belongs to the ferrochelatase family.

It is found in the cytoplasm. The enzyme catalyses Fe-coproporphyrin III + 2 H(+) = coproporphyrin III + Fe(2+). It functions in the pathway porphyrin-containing compound metabolism; protoheme biosynthesis. In terms of biological role, involved in coproporphyrin-dependent heme b biosynthesis. Catalyzes the insertion of ferrous iron into coproporphyrin III to form Fe-coproporphyrin III. This chain is Coproporphyrin III ferrochelatase, found in Mycobacteroides abscessus (strain ATCC 19977 / DSM 44196 / CCUG 20993 / CIP 104536 / JCM 13569 / NCTC 13031 / TMC 1543 / L948) (Mycobacterium abscessus).